The sequence spans 143 residues: Large ribosomal subunit protein uL15 (143 aa).

2 stretches are compositionally biased toward basic residues: residues 1 to 13 and 23 to 38; these read MIRKSKKITKMRG and KKHRGAGHRGGRGNAG. Residues 1 to 38 form a disordered region; it reads MIRKSKKITKMRGSRTCGYGEAKKHRGAGHRGGRGNAG.

The protein belongs to the universal ribosomal protein uL15 family. In terms of assembly, part of the 50S ribosomal subunit.

Its function is as follows. Binds to the 23S rRNA. This Methanococcus maripaludis (strain C6 / ATCC BAA-1332) protein is Large ribosomal subunit protein uL15.